Consider the following 460-residue polypeptide: ATP synthase subunit beta (460 aa).

Residue 150 to 157 (GGAGVGKT) participates in ATP binding.

This sequence belongs to the ATPase alpha/beta chains family. In terms of assembly, F-type ATPases have 2 components, CF(1) - the catalytic core - and CF(0) - the membrane proton channel. CF(1) has five subunits: alpha(3), beta(3), gamma(1), delta(1), epsilon(1). CF(0) has three main subunits: a(1), b(2) and c(9-12). The alpha and beta chains form an alternating ring which encloses part of the gamma chain. CF(1) is attached to CF(0) by a central stalk formed by the gamma and epsilon chains, while a peripheral stalk is formed by the delta and b chains.

Its subcellular location is the cell inner membrane. The catalysed reaction is ATP + H2O + 4 H(+)(in) = ADP + phosphate + 5 H(+)(out). Functionally, produces ATP from ADP in the presence of a proton gradient across the membrane. The catalytic sites are hosted primarily by the beta subunits. The sequence is that of ATP synthase subunit beta from Photorhabdus laumondii subsp. laumondii (strain DSM 15139 / CIP 105565 / TT01) (Photorhabdus luminescens subsp. laumondii).